Reading from the N-terminus, the 430-residue chain is Enolase (430 aa).

Position 162 (glutamine 162) interacts with (2R)-2-phosphoglycerate. The Proton donor role is filled by glutamate 204. Residues aspartate 241, glutamate 283, and aspartate 310 each contribute to the Mg(2+) site. (2R)-2-phosphoglycerate-binding residues include lysine 335, arginine 364, serine 365, and lysine 386. The active-site Proton acceptor is the lysine 335.

Belongs to the enolase family. Requires Mg(2+) as cofactor.

The protein resides in the cytoplasm. The protein localises to the secreted. It is found in the cell surface. The enzyme catalyses (2R)-2-phosphoglycerate = phosphoenolpyruvate + H2O. It participates in carbohydrate degradation; glycolysis; pyruvate from D-glyceraldehyde 3-phosphate: step 4/5. Catalyzes the reversible conversion of 2-phosphoglycerate (2-PG) into phosphoenolpyruvate (PEP). It is essential for the degradation of carbohydrates via glycolysis. The chain is Enolase from Mycobacteroides abscessus (strain ATCC 19977 / DSM 44196 / CCUG 20993 / CIP 104536 / JCM 13569 / NCTC 13031 / TMC 1543 / L948) (Mycobacterium abscessus).